Here is a 92-residue protein sequence, read N- to C-terminus: Phospholemman (92 aa).

A signal peptide spans 1 to 20; it reads MAYLHHTLLVCMGLLAMANA. Residues 22–35 are Extracellular-facing; that stretch reads APQEQDPFTYDYQS. A helical transmembrane segment spans residues 36–56; that stretch reads LRIGGLIIAGILFILGILIIL. Residues 57–92 are Cytoplasmic-facing; that stretch reads KRGAWERFDTARRTGEPDEEEGTFRSSIRRLSTRRR. Residues 67–92 are disordered; that stretch reads ARRTGEPDEEEGTFRSSIRRLSTRRR. Phosphothreonine is present on Thr79. Ser82 carries the phosphoserine modification. Ser83 carries the phosphoserine; by PKA and PKC modification. The segment covering 83 to 92 has biased composition (basic residues); the sequence is SIRRLSTRRR. A Phosphoserine; by PKA modification is found at Ser88. Thr89 is subject to Phosphothreonine; by PKC.

It belongs to the FXYD family. In terms of assembly, homotetramer. Monomer. Regulatory subunit of the sodium/potassium-transporting ATPase (NKA) which is composed of a catalytic alpha subunit, a non-catalytic beta subunit and an additional regulatory subunit. The monomeric form associates with NKA while the oligomeric form does not. Interacts with the catalytic alpha-1 subunit ATP1A1. Also interacts with the catalytic alpha-2 and alpha-3 subunits ATP1A2 and ATP1A3. Very little interaction with ATP1A1, ATP1A2 or ATP1A3 when phosphorylated at Ser-83. Interacts with the non-catalytic beta-1 subunit ATP1B1. Oxidative stress decreases interaction with ATP1A1 but increases interaction with ATP1B1. Post-translationally, major plasma membrane substrate for cAMP-dependent protein kinase (PKA) and protein kinase C (PKC) in several different tissues. Phosphorylated in response to insulin and adrenergic stimulation. Phosphorylation at Ser-88 stimulates sodium/potassium-transporting ATPase activity while the unphosphorylated form inhibits sodium/potassium-transporting ATPase activity. Phosphorylation increases tetramerization, decreases binding to ATP1A1 and reduces inhibition of ATP1A1 activity. Phosphorylation at Ser-83 leads to greatly reduced interaction with ATP1A1, ATP1A2 and ATP1A3. May be phosphorylated by DMPK. In terms of processing, palmitoylation increases half-life and stability and is enhanced upon phosphorylation at Ser-88 by PKA. Glutathionylated. In terms of tissue distribution, expressed in ventricular myocytes (at protein level).

The protein localises to the cell membrane. It localises to the sarcolemma. The protein resides in the apical cell membrane. It is found in the membrane. Its subcellular location is the caveola. The protein localises to the T-tubule. In terms of biological role, associates with and regulates the activity of the sodium/potassium-transporting ATPase (NKA) which transports Na(+) out of the cell and K(+) into the cell. Inhibits NKA activity in its unphosphorylated state and stimulates activity when phosphorylated. Reduces glutathionylation of the NKA beta-1 subunit ATP1B1, thus reversing glutathionylation-mediated inhibition of ATP1B1. Contributes to female sexual development by maintaining the excitability of neurons which secrete gonadotropin-releasing hormone. The sequence is that of Phospholemman from Oryctolagus cuniculus (Rabbit).